Here is a 529-residue protein sequence, read N- to C-terminus: GTPase Obg (529 aa).

Positions 2–159 (ASFVDRVVLH…SDIVLELKSI (158 aa)) constitute an Obg domain. One can recognise an OBG-type G domain in the interval 160-343 (ADIALVGFPS…LGFAMAEIVK (184 aa)). GTP contacts are provided by residues 166 to 173 (GFPSAGKS), 191 to 195 (FTTLI), 212 to 215 (DVPG), 295 to 298 (NKVD), and 324 to 326 (SAT). The Mg(2+) site is built by serine 173 and threonine 193. One can recognise an OCT domain in the interval 363–447 (PRAVNEAGFK…DDGVVFDWEP (85 aa)). A compositionally biased stretch (basic and acidic residues) spans 466–502 (FADIGDRPTRGQKRDEQQERRDAKAAARAELEAERKA). Residues 466-529 (FADIGDRPTR…ESGLTTENEE (64 aa)) are disordered.

Belongs to the TRAFAC class OBG-HflX-like GTPase superfamily. OBG GTPase family. Monomer. It depends on Mg(2+) as a cofactor.

It is found in the cytoplasm. Functionally, an essential GTPase which binds GTP, GDP and possibly (p)ppGpp with moderate affinity, with high nucleotide exchange rates and a fairly low GTP hydrolysis rate. Plays a role in control of the cell cycle, stress response, ribosome biogenesis and in those bacteria that undergo differentiation, in morphogenesis control. The protein is GTPase Obg of Arthrobacter sp. (strain FB24).